The chain runs to 348 residues: Endoglucanase-6B (348 aa).

Substrate is bound by residues tryptophan 52 and serine 54. Active-site proton donor residues include aspartate 92 and aspartate 139. 6 residues coordinate substrate: asparagine 183, tryptophan 186, asparagine 222, tryptophan 282, lysine 310, and glutamate 314. Residues 222-241 are compositionally biased toward low complexity; the sequence is NYNPYSTSNPPPYTSGSPSP. Residues 222–244 form a disordered region; it reads NYNPYSTSNPPPYTSGSPSPDES.

The protein belongs to the glycosyl hydrolase 6 (cellulase B) family. As to quaternary structure, monomer.

It catalyses the reaction Endohydrolysis of (1-&gt;4)-beta-D-glucosidic linkages in cellulose, lichenin and cereal beta-D-glucans.. Functionally, plays a central role in the recycling of plant biomass. The biological conversion of cellulose to glucose generally requires three types of hydrolytic enzymes: (1) Endoglucanases which cut internal beta-1,4-glucosidic bonds; (2) Exocellobiohydrolases that cut the disaccharide cellobiose from the non-reducing end of the cellulose polymer chain; (3) Beta-1,4-glucosidases which hydrolyze the cellobiose and other short cello-oligosaccharides to glucose. In Humicola insolens (Soft-rot fungus), this protein is Endoglucanase-6B.